Consider the following 354-residue polypeptide: Methylthioribose-1-phosphate isomerase (354 aa).

Substrate is bound by residues 58–60 (RGA), arginine 101, and glutamine 204. The Proton donor role is filled by aspartate 245. 255 to 256 (NK) is a binding site for substrate.

The protein belongs to the eIF-2B alpha/beta/delta subunits family. MtnA subfamily.

It carries out the reaction 5-(methylsulfanyl)-alpha-D-ribose 1-phosphate = 5-(methylsulfanyl)-D-ribulose 1-phosphate. It participates in amino-acid biosynthesis; L-methionine biosynthesis via salvage pathway; L-methionine from S-methyl-5-thio-alpha-D-ribose 1-phosphate: step 1/6. Functionally, catalyzes the interconversion of methylthioribose-1-phosphate (MTR-1-P) into methylthioribulose-1-phosphate (MTRu-1-P). The chain is Methylthioribose-1-phosphate isomerase from Xylella fastidiosa (strain M23).